Here is a 215-residue protein sequence, read N- to C-terminus: MHLTAEILAARRGEDLIFVNISFHLAAGEALVLTGKNGSGKSTLLRVVAGLLRPEKGTVIFHDEESPGGRHAGEVSHYLGHRNAMKNELTVAENLDFWRAFLGNTGSAAALSVEDATDAVGLSGITHLPFGYLSAGQQRRIAFAKLLVAHRPVWILDEPTAALDASADRLFADLIEAHLEKGGIVLAATHQPLGLRNSQELKMTGFAGVDNGVWG.

The ABC transporter domain occupies 3–211 (LTAEILAARR…KMTGFAGVDN (209 aa)). 35–42 (GKNGSGKS) contributes to the ATP binding site.

Belongs to the ABC transporter superfamily. CcmA exporter (TC 3.A.1.107) family. The complex is composed of two ATP-binding proteins (CcmA) and two transmembrane proteins (CcmB).

It is found in the cell inner membrane. It carries out the reaction heme b(in) + ATP + H2O = heme b(out) + ADP + phosphate + H(+). Part of the ABC transporter complex CcmAB involved in the biogenesis of c-type cytochromes; once thought to export heme, this seems not to be the case, but its exact role is uncertain. Responsible for energy coupling to the transport system. The sequence is that of Cytochrome c biogenesis ATP-binding export protein CcmA from Rhizobium johnstonii (strain DSM 114642 / LMG 32736 / 3841) (Rhizobium leguminosarum bv. viciae).